A 317-amino-acid polypeptide reads, in one-letter code: Sulfate adenylyltransferase subunit 2 (317 aa).

Disordered stretches follow at residues 1–21 and 298–317; these read MPDSRPDTELSNPQSAKAPLD and RAIDRDQSGSMEKKKREGYF.

This sequence belongs to the PAPS reductase family. CysD subfamily. Heterodimer composed of CysD, the smaller subunit, and CysN.

The catalysed reaction is sulfate + ATP + H(+) = adenosine 5'-phosphosulfate + diphosphate. It participates in sulfur metabolism; hydrogen sulfide biosynthesis; sulfite from sulfate: step 1/3. Functionally, with CysN forms the ATP sulfurylase (ATPS) that catalyzes the adenylation of sulfate producing adenosine 5'-phosphosulfate (APS) and diphosphate, the first enzymatic step in sulfur assimilation pathway. APS synthesis involves the formation of a high-energy phosphoric-sulfuric acid anhydride bond driven by GTP hydrolysis by CysN coupled to ATP hydrolysis by CysD. The sequence is that of Sulfate adenylyltransferase subunit 2 from Rhizobium etli (strain CIAT 652).